Consider the following 1704-residue polypeptide: Phospholipid-transporting ATPase ABCA3 (1704 aa).

N-linked (GlcNAc...) asparagine glycosylation occurs at asparagine 14. Residues valine 22–leucine 42 traverse the membrane as a helical segment. 4 N-linked (GlcNAc...) asparagine glycosylation sites follow: asparagine 53, asparagine 124, asparagine 140, and asparagine 228. The next 6 helical transmembrane spans lie at tyrosine 261–valine 283, alanine 307–phenylalanine 327, serine 344–valine 364, isoleucine 373–alanine 393, leucine 405–phenylalanine 425, and phenylalanine 447–threonine 467. Residues isoleucine 530–valine 763 form the ABC transporter 1 domain. ATP is bound at residue glycine 566–threonine 573. N-linked (GlcNAc...) asparagine glycosylation is present at asparagine 620. The next 7 membrane-spanning stretches (helical) occupy residues methionine 925–histidine 945, isoleucine 1100–valine 1120, serine 1144–phenylalanine 1164, leucine 1183–phenylalanine 1203, leucine 1213–isoleucine 1233, leucine 1245–tyrosine 1265, and methionine 1310–tryptophan 1330. Asparagine 1350 carries an N-linked (GlcNAc...) asparagine glycan. The 234-residue stretch at leucine 1381–lysine 1614 folds into the ABC transporter 2 domain. Glycine 1416 to threonine 1423 is an ATP binding site.

The protein belongs to the ABC transporter superfamily. ABCA family. As to quaternary structure, homooligomer; disulfide-linked. N-glycosylated. Localization at intracellular vesicles is accompanied by processing of oligosaccharide from high mannose type to complex type. N-linked glycosylation at Asn-124 and Asn-140 is required for stability and efficient anterograde trafficking and prevents from proteasomal degradation. Post-translationally, proteolytically cleaved by CTSL and to a lower extent by CTSB within multivesicular bodies (MVB) and lamellar bodies (LB) leading to a mature form of 150 kDa. Highly expressed in the lung and moderately expressed in the kidney, adipose, macrophage, and spleen.

It localises to the endosome. Its subcellular location is the multivesicular body membrane. The protein resides in the cytoplasmic vesicle membrane. The protein localises to the late endosome membrane. It is found in the lysosome membrane. It carries out the reaction a 1,2-diacyl-sn-glycero-3-phospho-(1'-sn-glycerol)(in) + ATP + H2O = a 1,2-diacyl-sn-glycero-3-phospho-(1'-sn-glycerol)(out) + ADP + phosphate + H(+). The enzyme catalyses a 1,2-diacyl-sn-glycero-3-phosphocholine(in) + ATP + H2O = a 1,2-diacyl-sn-glycero-3-phosphocholine(out) + ADP + phosphate + H(+). The catalysed reaction is ATP + H2O + phospholipidSide 1 = ADP + phosphate + phospholipidSide 2.. It catalyses the reaction ATP + H2O + xenobioticSide 1 = ADP + phosphate + xenobioticSide 2.. It carries out the reaction 1,2-dihexadecanoyl-sn-glycero-3-phosphocholine(in) + ATP + H2O = 1,2-dihexadecanoyl-sn-glycero-3-phosphocholine(out) + ADP + phosphate + H(+). The enzyme catalyses cholesterol(in) + ATP + H2O = cholesterol(out) + ADP + phosphate + H(+). Catalyzes the ATP-dependent transport of phospholipids such as phosphatidylcholine and phosphoglycerol from the cytoplasm into the lumen side of lamellar bodies, in turn participates in the lamellar bodies biogenesis and homeostasis of pulmonary surfactant. Transports preferentially phosphatidylcholine containing short acyl chains. In addition plays a role as an efflux transporter of miltefosine across macrophage membranes and free cholesterol (FC) through intralumenal vesicles by removing FC from the cell as a component of surfactant and protects cells from free cholesterol toxicity. The sequence is that of Phospholipid-transporting ATPase ABCA3 (Abca3) from Mus musculus (Mouse).